A 489-amino-acid polypeptide reads, in one-letter code: UDP-N-acetylmuramate--L-alanine ligase (489 aa).

128-134 (GTHGKTT) contributes to the ATP binding site.

Belongs to the MurCDEF family.

Its subcellular location is the cytoplasm. The enzyme catalyses UDP-N-acetyl-alpha-D-muramate + L-alanine + ATP = UDP-N-acetyl-alpha-D-muramoyl-L-alanine + ADP + phosphate + H(+). It participates in cell wall biogenesis; peptidoglycan biosynthesis. Its function is as follows. Cell wall formation. This chain is UDP-N-acetylmuramate--L-alanine ligase, found in Shewanella halifaxensis (strain HAW-EB4).